Consider the following 416-residue polypeptide: ABSCISIC ACID-INSENSITIVE 5-like protein 5 (416 aa).

A disordered region spans residues 1–23; it reads MDGSMNLGNEPPGDGGGGGGLTR. A compositionally biased stretch (gly residues) spans 13 to 22; sequence GDGGGGGGLT. Phosphoserine is present on residues serine 26, serine 45, and serine 86. Threonine 135 is modified (phosphothreonine). Positions 300-326 are disordered; the sequence is SEGIGKSNGDSSSLSPSPYMFNGGVRG. In terms of domain architecture, bZIP spans 336–399; it reads VERRQRRMIK…KNQETEMRNL (64 aa). The tract at residues 338–357 is basic motif; sequence RRQRRMIKNRESAARSRARK. The segment at 364–385 is leucine-zipper; sequence LEAEVAKLKEENDELQRKQARI. The disordered stretch occupies residues 388-416; it reads MQKNQETEMRNLLQGGPKKKLRRTESGPW.

It belongs to the bZIP family. ABI5 subfamily. As to quaternary structure, DNA-binding heterodimer. Interacts with ARIA. Post-translationally, the activation by phosphorylation is induced by abscisic acid (ABA). Phosphorylated by SRK2C, SRK2D, SRK2E, SRK2F and SRK2I in vitro. Expressed in roots, leaves, flowers and siliques but not in seeds.

It localises to the nucleus. Involved in ABA and stress responses and acts as a positive component of glucose signal transduction. Functions as a transcriptional activator in the ABA-inducible expression of rd29B. Binds specifically to the ABA-responsive element (ABRE) of the rd29B gene promoter. The polypeptide is ABSCISIC ACID-INSENSITIVE 5-like protein 5 (ABF2) (Arabidopsis thaliana (Mouse-ear cress)).